Consider the following 347-residue polypeptide: NADH-ubiquinone oxidoreductase chain 2 (347 aa).

11 helical membrane passes run 3–23 (PLIF…VMTT), 25–45 (HWVM…PILM), 59–79 (YFLT…INLV), 96–116 (IIMT…FWVP), 122–142 (VQLS…MSIL), 149–169 (INLD…GWGG), 178–198 (IMAY…VYNP), 200–220 (MALL…MMLM), 240–260 (LTTA…LSGF), 276–296 (MIMP…YMRL), and 326–346 (LSPL…LALL).

Belongs to the complex I subunit 2 family. Core subunit of respiratory chain NADH dehydrogenase (Complex I) which is composed of 45 different subunits. Interacts with TMEM242.

It is found in the mitochondrion inner membrane. The enzyme catalyses a ubiquinone + NADH + 5 H(+)(in) = a ubiquinol + NAD(+) + 4 H(+)(out). Core subunit of the mitochondrial membrane respiratory chain NADH dehydrogenase (Complex I) which catalyzes electron transfer from NADH through the respiratory chain, using ubiquinone as an electron acceptor. Essential for the catalytic activity and assembly of complex I. The sequence is that of NADH-ubiquinone oxidoreductase chain 2 from Nyctimene albiventer (Common tube-nosed fruit bat).